A 68-amino-acid chain; its full sequence is Molybdenum-pterin-binding protein 3 (68 aa).

Residues 2–68 enclose the Mop domain; it reads SISARNQLKG…IKSTDVMILA (67 aa).

In terms of biological role, binds one mole of molybdenum per mole of protein and contains a pterin. The sequence is that of Molybdenum-pterin-binding protein 3 (mopIII) from Clostridium pasteurianum.